A 274-amino-acid chain; its full sequence is Fatty-acid O-methyltransferase (274 aa).

It belongs to the methyltransferase superfamily.

It catalyses the reaction a fatty acid + S-adenosyl-L-methionine = a fatty acid methyl ester + S-adenosyl-L-homocysteine. Functionally, O-methyltransferase that modifies the hydroxy group of the fatty acids. Oleate is the most effective fatty acid acceptor. The sequence is that of Fatty-acid O-methyltransferase (mtf2) from Mycolicibacterium smegmatis (strain ATCC 700084 / mc(2)155) (Mycobacterium smegmatis).